The sequence spans 227 residues: Ribose-5-phosphate isomerase A (227 aa).

Residues 26–29, 82–85, and 95–98 contribute to the substrate site; these read TGST, DGAD, and KGGG. The Proton acceptor role is filled by Glu104. Position 122 (Lys122) interacts with substrate.

It belongs to the ribose 5-phosphate isomerase family. Homodimer.

It catalyses the reaction aldehydo-D-ribose 5-phosphate = D-ribulose 5-phosphate. Its pathway is carbohydrate degradation; pentose phosphate pathway; D-ribose 5-phosphate from D-ribulose 5-phosphate (non-oxidative stage): step 1/1. Catalyzes the reversible conversion of ribose-5-phosphate to ribulose 5-phosphate. This is Ribose-5-phosphate isomerase A from Streptococcus equi subsp. zooepidemicus (strain MGCS10565).